We begin with the raw amino-acid sequence, 446 residues long: Ribosomal protein uS12 methylthiotransferase RimO (446 aa).

Residues 4 to 119 enclose the MTTase N-terminal domain; it reads LKVGLISLGC…LVENINNFIS (116 aa). [4Fe-4S] cluster-binding residues include Cys13, Cys48, Cys82, Cys157, Cys161, and Cys164. One can recognise a Radical SAM core domain in the interval 143–373; the sequence is TTKSHTAYLR…MMLQKHIIYS (231 aa). The TRAM domain maps to 376–442; that stretch reads KYKIGNKYKV…EYDLVGVVYD (67 aa).

Belongs to the methylthiotransferase family. RimO subfamily. It depends on [4Fe-4S] cluster as a cofactor.

It is found in the cytoplasm. It catalyses the reaction L-aspartate(89)-[ribosomal protein uS12]-hydrogen + (sulfur carrier)-SH + AH2 + 2 S-adenosyl-L-methionine = 3-methylsulfanyl-L-aspartate(89)-[ribosomal protein uS12]-hydrogen + (sulfur carrier)-H + 5'-deoxyadenosine + L-methionine + A + S-adenosyl-L-homocysteine + 2 H(+). Catalyzes the methylthiolation of an aspartic acid residue of ribosomal protein uS12. This is Ribosomal protein uS12 methylthiotransferase RimO from Clostridium kluyveri (strain ATCC 8527 / DSM 555 / NBRC 12016 / NCIMB 10680 / K1).